Consider the following 294-residue polypeptide: MDEYKKAEILIEALPYICKFHDQKFVIKYGGHAMVNEQAKNWIAKDMVLLKYVGINPIIVHGGGPEINRAMEKMGKVPEFIHGLRVTDEETLEIVKMVLIGKINGDIVSKLEQYGGKSVGLSGKSGQLIKARKKIQYLIRDNEKIEVDLGMVGEVERVDTKLVDILVEKKYIPVISPIGVDEQNKDLNLNADIAAGDIAGAMNAEKLIMVTDVDGIMDDINDPKTLHRKLTISQIEKMIEKGIITGGMIPKIEACINALNKGVQSVHIVNGKIPHAVLLEIFTEEGIGTMILKD.

Substrate contacts are provided by residues 63–64, R85, and N188; that span reads GG.

This sequence belongs to the acetylglutamate kinase family. ArgB subfamily.

The protein resides in the cytoplasm. The enzyme catalyses N-acetyl-L-glutamate + ATP = N-acetyl-L-glutamyl 5-phosphate + ADP. It functions in the pathway amino-acid biosynthesis; L-arginine biosynthesis; N(2)-acetyl-L-ornithine from L-glutamate: step 2/4. Catalyzes the ATP-dependent phosphorylation of N-acetyl-L-glutamate. In Methanococcus vannielii (strain ATCC 35089 / DSM 1224 / JCM 13029 / OCM 148 / SB), this protein is Acetylglutamate kinase.